The primary structure comprises 96 residues: Co-chaperonin GroES (96 aa).

It belongs to the GroES chaperonin family. Heptamer of 7 subunits arranged in a ring. Interacts with the chaperonin GroEL.

It is found in the cytoplasm. Together with the chaperonin GroEL, plays an essential role in assisting protein folding. The GroEL-GroES system forms a nano-cage that allows encapsulation of the non-native substrate proteins and provides a physical environment optimized to promote and accelerate protein folding. GroES binds to the apical surface of the GroEL ring, thereby capping the opening of the GroEL channel. This chain is Co-chaperonin GroES, found in Aliivibrio fischeri (strain ATCC 700601 / ES114) (Vibrio fischeri).